The chain runs to 129 residues: SPbeta prophage-derived protein NrdI (129 aa).

The protein belongs to the NrdI family.

Functionally, probably involved in ribonucleotide reductase function. This chain is SPbeta prophage-derived protein NrdI (nrdIB), found in Bacillus subtilis (strain 168).